The primary structure comprises 525 residues: Potassium voltage-gated channel subfamily A member 3 (525 aa).

The tract at residues 1–23 is disordered; that stretch reads MTVVPGDHLLEPEAAGGGGGDPP. Topologically, residues 1-184 are cytoplasmic; it reads MTVVPGDHLL…EYPESSGPAR (184 aa). The helical transmembrane segment at 185 to 203 threads the bilayer; the sequence is GIAIVSVLVILISIVIFCL. Residues 204–244 are Extracellular-facing; it reads ETLPEFRDEKDYPASPSQDVFEAANNSTSGASSGASSFSDP. N-linked (GlcNAc...) asparagine glycosylation occurs at N229. A helical transmembrane segment spans residues 245–266; sequence FFVVETLCIIWFSFELLVRFFA. C267 carries S-palmitoyl cysteine lipidation. The Cytoplasmic segment spans residues 267 to 277; it reads CPSKATFSRNI. The chain crosses the membrane as a helical span at residues 278–298; sequence MNLIDIVAIIPYFITLGTELA. The Extracellular portion of the chain corresponds to 299 to 312; the sequence is ERQGNGQQAMSLAI. The helical; Voltage-sensor transmembrane segment at 313–331 threads the bilayer; that stretch reads LRVIRLVRVFRIFKLSRHS. Over 332–347 the chain is Cytoplasmic; it reads KGLQILGQTLKASMRE. The chain crosses the membrane as a helical span at residues 348–367; sequence LGLLIFFLFIGVILFSSAVY. Over 368–408 the chain is Extracellular; the sequence is FAEADDPSSGFNSIPDAFWWAVVTMTTVGYGDMHPVTIGGK. Positions 394–399 match the Selectivity filter motif; that stretch reads TVGYGD. The chain crosses the membrane as a helical span at residues 409–431; that stretch reads IVGSLCAIAGVLTIALPVPVIVS. Residues 432 to 525 are Cytoplasmic-facing; sequence NFNYFYHRET…VNIKKIFTDV (94 aa). Residues 432-525 form an interaction with KCNE4 region; sequence NFNYFYHRET…VNIKKIFTDV (94 aa). Residue Y449 is modified to Phosphotyrosine. Position 470 is a phosphoserine; by PKA (S470). Positions 523–525 match the PDZ-binding motif; the sequence is TDV.

This sequence belongs to the potassium channel family. A (Shaker) (TC 1.A.1.2) subfamily. Kv1.3/KCNA3 sub-subfamily. As to quaternary structure, homotetramer. Forms heterooligomers with KCNE4 which inhibits KCNA3 activity by impairing localization to the cell membrane. The stoichiometry of KCNA3 and KCNE4 in the heterooligomers are 4:1, 4:2, 4:3 or 4:4 respectively. Increasing the number of KCNE4 subunits steadily slows the activation KCNA3 and decreases its abundance at the cell membrane. However, a single subunit of KCNE4 is sufficient for the cooperative enhancement of the inactivating function of the channel. Interacts with SEC24D; this interaction is reduced in the presence of KCNE4. Interacts with DLG1, DLG2 and DLG4 via their PDZ domains. In terms of processing, phosphorylation on Tyr-449 inhibits its channel activity. N-glycosylation promotes the cell surface expression.

It localises to the cell membrane. The enzyme catalyses K(+)(in) = K(+)(out). With respect to regulation, activity is up-regulated by JAK2. In terms of biological role, mediates the voltage-dependent potassium ion permeability of excitable membranes. Assuming opened or closed conformations in response to the voltage difference across the membrane, the protein forms a potassium-selective channel through which potassium ions may pass in accordance with their electrochemical gradient. This chain is Potassium voltage-gated channel subfamily A member 3 (Kcna3), found in Rattus norvegicus (Rat).